The chain runs to 499 residues: Glycerol kinase (499 aa).

Residue threonine 13 participates in ADP binding. Residues threonine 13, threonine 14, and serine 15 each coordinate ATP. Threonine 13 contacts sn-glycerol 3-phosphate. Arginine 17 is a binding site for ADP. Residues arginine 83, glutamate 84, tyrosine 135, and aspartate 245 each contribute to the sn-glycerol 3-phosphate site. Glycerol is bound by residues arginine 83, glutamate 84, tyrosine 135, aspartate 245, and glutamine 246. 2 residues coordinate ADP: threonine 267 and glycine 310. Positions 267, 310, 314, and 411 each coordinate ATP. ADP-binding residues include alanine 411 and asparagine 415.

It belongs to the FGGY kinase family.

The enzyme catalyses glycerol + ATP = sn-glycerol 3-phosphate + ADP + H(+). Its pathway is polyol metabolism; glycerol degradation via glycerol kinase pathway; sn-glycerol 3-phosphate from glycerol: step 1/1. Its activity is regulated as follows. Inhibited by fructose 1,6-bisphosphate (FBP). Key enzyme in the regulation of glycerol uptake and metabolism. Catalyzes the phosphorylation of glycerol to yield sn-glycerol 3-phosphate. The chain is Glycerol kinase from Xylella fastidiosa (strain 9a5c).